A 389-amino-acid chain; its full sequence is Succinate--CoA ligase [ADP-forming] subunit beta (389 aa).

In terms of domain architecture, ATP-grasp spans 9 to 244; sequence KAVLAKYGVP…LTEEDPAEVE (236 aa). ATP-binding positions include lysine 46, 53-55, glutamate 99, serine 102, and glutamate 107; that span reads GRG. 2 residues coordinate Mg(2+): asparagine 199 and aspartate 213. Substrate-binding positions include asparagine 264 and 321–323; that span reads GIM.

This sequence belongs to the succinate/malate CoA ligase beta subunit family. Heterotetramer of two alpha and two beta subunits. Requires Mg(2+) as cofactor.

It catalyses the reaction succinate + ATP + CoA = succinyl-CoA + ADP + phosphate. The catalysed reaction is GTP + succinate + CoA = succinyl-CoA + GDP + phosphate. Its pathway is carbohydrate metabolism; tricarboxylic acid cycle; succinate from succinyl-CoA (ligase route): step 1/1. In terms of biological role, succinyl-CoA synthetase functions in the citric acid cycle (TCA), coupling the hydrolysis of succinyl-CoA to the synthesis of either ATP or GTP and thus represents the only step of substrate-level phosphorylation in the TCA. The beta subunit provides nucleotide specificity of the enzyme and binds the substrate succinate, while the binding sites for coenzyme A and phosphate are found in the alpha subunit. In Parvibaculum lavamentivorans (strain DS-1 / DSM 13023 / NCIMB 13966), this protein is Succinate--CoA ligase [ADP-forming] subunit beta.